The following is a 20-amino-acid chain: Pregnancy-associated glycoprotein 75 (20 aa).

This sequence belongs to the peptidase A1 family. N-glycosylated. As to expression, expressed in chorionic epithelium (trophectoderm).

Its subcellular location is the secreted. The chain is Pregnancy-associated glycoprotein 75 from Bubalus bubalis (Domestic water buffalo).